A 382-amino-acid chain; its full sequence is D-galactonate dehydratase (382 aa).

Asp-183 is a Mg(2+) binding site. The active-site Proton donor is the His-185. The Mg(2+) site is built by Glu-209 and Glu-235. His-285 functions as the Proton acceptor in the catalytic mechanism.

This sequence belongs to the mandelate racemase/muconate lactonizing enzyme family. GalD subfamily. Mg(2+) serves as cofactor.

The enzyme catalyses D-galactonate = 2-dehydro-3-deoxy-D-galactonate + H2O. Its pathway is carbohydrate acid metabolism; D-galactonate degradation; D-glyceraldehyde 3-phosphate and pyruvate from D-galactonate: step 1/3. Functionally, catalyzes the dehydration of D-galactonate to 2-keto-3-deoxy-D-galactonate. The sequence is that of D-galactonate dehydratase from Klebsiella pneumoniae (strain 342).